The primary structure comprises 274 residues: Large ribosomal subunit protein uL2 (274 aa).

Disordered regions lie at residues 28–55 (APHAPLLEKKSKSGGRNNNGRITTRHVG) and 224–274 (VAMN…RRRK).

This sequence belongs to the universal ribosomal protein uL2 family. In terms of assembly, part of the 50S ribosomal subunit. Forms a bridge to the 30S subunit in the 70S ribosome.

Functionally, one of the primary rRNA binding proteins. Required for association of the 30S and 50S subunits to form the 70S ribosome, for tRNA binding and peptide bond formation. It has been suggested to have peptidyltransferase activity; this is somewhat controversial. Makes several contacts with the 16S rRNA in the 70S ribosome. The sequence is that of Large ribosomal subunit protein uL2 from Pseudomonas putida (strain W619).